Here is a 174-residue protein sequence, read N- to C-terminus: Inner membrane protein p22 (174 aa).

The Intravirion segment spans residues 1-7; that stretch reads MLHIKMT. The helical transmembrane segment at 8–28 threads the bilayer; it reads ISTLLIALIVLLIIILVVFLY. The Virion surface segment spans residues 29 to 174; the sequence is HKKQQPPKKV…LYLPRNHKYA (146 aa).

The protein belongs to the asfivirus inner membrane protein p22 family.

The protein localises to the virion membrane. It is found in the host cell membrane. This chain is Inner membrane protein p22, found in African swine fever virus (isolate Pig/Kenya/KEN-50/1950) (ASFV).